Reading from the N-terminus, the 164-residue chain is MKITAIYPGTFDPLTNGHTDLIQRASKMFDTVIVAIAHNPSKQPCFSLDERVALANTLLTHIDNVKVIGFSGLLADLARDHNANVLIRGIRAVSDFDYEFQLANMNRRLNPDLESVFLTPSERNSFISSTLVKEVARHNGDVSEFVDPIVMAALNKKLGCSYSK.

Thr10 provides a ligand contact to substrate. Residues 10–11 and His18 contribute to the ATP site; that span reads TF. Residues Lys42, Leu74, and Arg88 each contribute to the substrate site. ATP is bound by residues 89–91, Glu99, and 124–130; these read GIR and NSFISST.

The protein belongs to the bacterial CoaD family. As to quaternary structure, homohexamer. It depends on Mg(2+) as a cofactor.

Its subcellular location is the cytoplasm. The enzyme catalyses (R)-4'-phosphopantetheine + ATP + H(+) = 3'-dephospho-CoA + diphosphate. The protein operates within cofactor biosynthesis; coenzyme A biosynthesis; CoA from (R)-pantothenate: step 4/5. Its function is as follows. Reversibly transfers an adenylyl group from ATP to 4'-phosphopantetheine, yielding dephospho-CoA (dPCoA) and pyrophosphate. This Pseudoalteromonas translucida (strain TAC 125) protein is Phosphopantetheine adenylyltransferase.